Here is a 399-residue protein sequence, read N- to C-terminus: 1-deoxy-D-xylulose 5-phosphate reductoisomerase (399 aa).

NADPH-binding residues include Thr10, Gly11, Ser12, Ile13, and Asn124. Lys125 contributes to the 1-deoxy-D-xylulose 5-phosphate binding site. Glu126 serves as a coordination point for NADPH. Asp150 is a binding site for Mn(2+). 1-deoxy-D-xylulose 5-phosphate contacts are provided by Ser151, Glu152, Ser186, and His209. Glu152 serves as a coordination point for Mn(2+). An NADPH-binding site is contributed by Gly215. The 1-deoxy-D-xylulose 5-phosphate site is built by Ser222, Asn227, Lys228, and Glu231. Mn(2+) is bound at residue Glu231.

This sequence belongs to the DXR family. It depends on Mg(2+) as a cofactor. Mn(2+) serves as cofactor.

It carries out the reaction 2-C-methyl-D-erythritol 4-phosphate + NADP(+) = 1-deoxy-D-xylulose 5-phosphate + NADPH + H(+). The protein operates within isoprenoid biosynthesis; isopentenyl diphosphate biosynthesis via DXP pathway; isopentenyl diphosphate from 1-deoxy-D-xylulose 5-phosphate: step 1/6. Functionally, catalyzes the NADPH-dependent rearrangement and reduction of 1-deoxy-D-xylulose-5-phosphate (DXP) to 2-C-methyl-D-erythritol 4-phosphate (MEP). The sequence is that of 1-deoxy-D-xylulose 5-phosphate reductoisomerase from Psychromonas ingrahamii (strain DSM 17664 / CCUG 51855 / 37).